The sequence spans 623 residues: Interleukin-27 receptor subunit alpha (623 aa).

The signal sequence occupies residues 1 to 24; it reads MNRLRVARLTPLELLLSLMSLLLG. The Extracellular portion of the chain corresponds to 25 to 510; sequence TRPHGSPGPL…HLPDNRIRWK (486 aa). Fibronectin type-III domains are found at residues 30–124 and 125–225; these read SPGP…MKPD and TPQI…TPFL. N-linked (GlcNAc...) asparagine glycosylation is present at Asn46. Residues 211–215 carry the WSXWS motif motif; the sequence is WGEWS. Asn296, Asn305, Asn360, Asn368, and Asn461 each carry an N-linked (GlcNAc...) asparagine glycan. Fibronectin type-III domains lie at 316–412 and 413–505; these read APCD…VPLA and GPAV…LPDN. A helical membrane pass occupies residues 511-531; sequence ALPWFLSLWGLLLMGCGLSLA. Residues 532–623 are Cytoplasmic-facing; the sequence is STRCLQARCL…PTPEELGLLV (92 aa). The Box 1 motif motif lies at 552-560; it reads IWERVPDPA.

It belongs to the type I cytokine receptor family. Type 2 subfamily. Expressed in CD4+ and CD8+ T-cells, B-cells, natural killer cells and macrophages. Highest levels in CD4+ T-cells and natural killer cells. Expression highest in Th0 cells.

The protein resides in the membrane. Functionally, receptor for IL27. Requires IL6ST/GP130 to mediate signal transduction in response to IL27. This signaling system acts through STAT3 and STAT1. Involved in the regulation of Th1-type immune responses. Also appears to be involved in innate defense mechanisms. In Mus musculus (Mouse), this protein is Interleukin-27 receptor subunit alpha (Il27ra).